The chain runs to 107 residues: U1-lycotoxin-Ls1e (107 aa).

Positions 1-20 are cleaved as a signal peptide; the sequence is MMKVLVVVALLVTLISYSSS. Positions 21–41 are excised as a propeptide; that stretch reads EGIDDLEADELLSLMANEQTR. 4 disulfide bridges follow: C44-C59, C51-C68, C58-C86, and C70-C84.

Belongs to the neurotoxin 19 (CSTX) family. 04 (U1-Lctx) subfamily. As to expression, expressed by the venom gland.

It localises to the secreted. The polypeptide is U1-lycotoxin-Ls1e (Lycosa singoriensis (Wolf spider)).